We begin with the raw amino-acid sequence, 40 residues long: Beta-defensin 2 (40 aa).

Disulfide bonds link cysteine 7-cysteine 36, cysteine 14-cysteine 29, and cysteine 19-cysteine 37.

The protein belongs to the beta-defensin family. In terms of tissue distribution, neutrophilic granules.

The protein localises to the secreted. Functionally, has bactericidal activity. Active against E.coli ML35 and S.aureus 502A. The chain is Beta-defensin 2 (DEFB2) from Bos taurus (Bovine).